The chain runs to 469 residues: Glutamate--tRNA ligase (469 aa).

The 'HIGH' region signature appears at 9 to 19 (PSPTGFLHVGG). A 'KMSKS' region motif is present at residues 236 to 240 (KLSKR). Residue Lys-239 participates in ATP binding.

The protein belongs to the class-I aminoacyl-tRNA synthetase family. Glutamate--tRNA ligase type 1 subfamily. In terms of assembly, monomer.

The protein localises to the cytoplasm. The enzyme catalyses tRNA(Glu) + L-glutamate + ATP = L-glutamyl-tRNA(Glu) + AMP + diphosphate. Catalyzes the attachment of glutamate to tRNA(Glu) in a two-step reaction: glutamate is first activated by ATP to form Glu-AMP and then transferred to the acceptor end of tRNA(Glu). The protein is Glutamate--tRNA ligase of Shewanella amazonensis (strain ATCC BAA-1098 / SB2B).